The chain runs to 92 residues: uncharacterized protein (92 aa).

This is an uncharacterized protein from Archaeoglobus fulgidus (strain ATCC 49558 / DSM 4304 / JCM 9628 / NBRC 100126 / VC-16).